Here is a 574-residue protein sequence, read N- to C-terminus: Mitochondrial distribution and morphology protein 34 (574 aa).

The SMP-LTD domain maps to 1-195 (MAFNFNWSPL…LPAIIHRLSL (195 aa)). Disordered stretches follow at residues 210 to 233 (RESP…KDPV), 301 to 403 (EGAA…TPPT), and 479 to 515 (SADG…ESNA). Low complexity-rich tracts occupy residues 212–224 (SPAA…GEDP), 302–314 (GAAS…GSPV), and 323–334 (SSPLSSLQDASS). The segment covering 335-345 (VLSLQNRSTTP) has biased composition (polar residues). Over residues 346 to 359 (GSSFSGYGLSLGAG) the composition is skewed to low complexity. Basic residues predominate over residues 360-373 (RHSKTRPTRKRKKR). Basic and acidic residues predominate over residues 374–385 (VVDLRKHNKPAD). Residues 393 to 403 (STFTESTTPPT) show a composition bias toward low complexity. Positions 484–493 (KTSSQQQPIS) are enriched in polar residues.

It belongs to the MDM34 family. In terms of assembly, component of the ER-mitochondria encounter structure (ERMES) or MDM complex, composed of MMM1, MDM10, MDM12 and MDM34.

Its subcellular location is the mitochondrion outer membrane. Its function is as follows. Component of the ERMES/MDM complex, which serves as a molecular tether to connect the endoplasmic reticulum (ER) and mitochondria. Components of this complex are involved in the control of mitochondrial shape and protein biogenesis, and function in nonvesicular lipid trafficking between the ER and mitochondria. MDM34 is required for the interaction of the ER-resident membrane protein MMM1 and the outer mitochondrial membrane-resident beta-barrel protein MDM10. The sequence is that of Mitochondrial distribution and morphology protein 34 from Coccidioides immitis (strain RS) (Valley fever fungus).